A 521-amino-acid polypeptide reads, in one-letter code: Probable glycine dehydrogenase (decarboxylating) subunit 2 (521 aa).

An N6-(pyridoxal phosphate)lysine modification is found at Lys279.

Belongs to the GcvP family. C-terminal subunit subfamily. In terms of assembly, the glycine cleavage system is composed of four proteins: P, T, L and H. In this organism, the P 'protein' is a heterodimer of two subunits. Requires pyridoxal 5'-phosphate as cofactor.

The catalysed reaction is N(6)-[(R)-lipoyl]-L-lysyl-[glycine-cleavage complex H protein] + glycine + H(+) = N(6)-[(R)-S(8)-aminomethyldihydrolipoyl]-L-lysyl-[glycine-cleavage complex H protein] + CO2. The glycine cleavage system catalyzes the degradation of glycine. The P protein binds the alpha-amino group of glycine through its pyridoxal phosphate cofactor; CO(2) is released and the remaining methylamine moiety is then transferred to the lipoamide cofactor of the H protein. This chain is Probable glycine dehydrogenase (decarboxylating) subunit 2, found in Staphylothermus marinus (strain ATCC 43588 / DSM 3639 / JCM 9404 / F1).